We begin with the raw amino-acid sequence, 637 residues long: tRNA 5-methylaminomethyl-2-thiouridine biosynthesis bifunctional protein MnmC (637 aa).

Positions 1–20 (MSERIEWLEDGTAGGSPYSP) are disordered. Positions 1-232 (MSERIEWLED…KRDNLQGEYQ (232 aa)) are tRNA (mnm(5)s(2)U34)-methyltransferase. Residues 255 to 637 (IGAGLAGSAV…YATRLQPSGS (383 aa)) are FAD-dependent cmnm(5)s(2)U34 oxidoreductase.

It in the N-terminal section; belongs to the methyltransferase superfamily. tRNA (mnm(5)s(2)U34)-methyltransferase family. This sequence in the C-terminal section; belongs to the DAO family. Requires FAD as cofactor.

It is found in the cytoplasm. It catalyses the reaction 5-aminomethyl-2-thiouridine(34) in tRNA + S-adenosyl-L-methionine = 5-methylaminomethyl-2-thiouridine(34) in tRNA + S-adenosyl-L-homocysteine + H(+). Catalyzes the last two steps in the biosynthesis of 5-methylaminomethyl-2-thiouridine (mnm(5)s(2)U) at the wobble position (U34) in tRNA. Catalyzes the FAD-dependent demodification of cmnm(5)s(2)U34 to nm(5)s(2)U34, followed by the transfer of a methyl group from S-adenosyl-L-methionine to nm(5)s(2)U34, to form mnm(5)s(2)U34. This is tRNA 5-methylaminomethyl-2-thiouridine biosynthesis bifunctional protein MnmC from Polaromonas naphthalenivorans (strain CJ2).